We begin with the raw amino-acid sequence, 482 residues long: MDFYTTDINKNVVPLFSKGTVARTASKAQYPSWCNNALKLTNILLKSLRCKFQTNRCEDDRGFEVYCVILKSIALLMAAKESLILLQIPPSLPSGFPFRSPQLSFTYLSTRLSGSQHKSTHSHHINHQTHPIHSSSSNSNSNNRIPTKTDSSKQHTQHFSFANAGASNRDELLSIVRKIDKSNLKCCDCGSTATVEWVSINLLCILCIKCSGVHRSLGSHISKIRSLTLDNFTSLELMHLLQNNVSNSNVNAIYESNLRNFPVKKITANSDDSERSKFIIDKYQFKKFVIDSNQGREASLKSLIKAIHLDSVFMMQRAIAQSKYSLRELTASEKEQNDLNHSSIFQYSLKHYEIVDGTPIFFITEFLLCNGIHIDNLPKITTNWSPKVLEYWETKLEMYGTFQAVNTSRPRSGPHLNMHSNVDSASSYNKKHDLRVNIPERSASASKRWSLSSIPKSSQNLMSPTNLLTMHKSLKLAKKDKK.

Positions 116 to 156 (QHKSTHSHHINHQTHPIHSSSSNSNSNNRIPTKTDSSKQHT) are disordered. Basic residues predominate over residues 118 to 127 (KSTHSHHINH). A compositionally biased stretch (low complexity) spans 134-143 (SSSSNSNSNN). The Arf-GAP domain occupies 170 to 297 (DELLSIVRKI…FVIDSNQGRE (128 aa)). The segment at 186 to 210 (CCDCGSTATVEWVSINLLCILCIKC) adopts a C4-type zinc-finger fold.

It is found in the cytoplasm. In terms of biological role, GTPase-activating protein (GAP) for the ADP ribosylation factors ARF1 and ARF2. May be involved in the endocytic pathway. The sequence is that of ADP-ribosylation factor GTPase-activating protein effector protein 1 (AGE1) from Saccharomyces cerevisiae (strain ATCC 204508 / S288c) (Baker's yeast).